The chain runs to 163 residues: Allophycocyanin alpha-B chain (163 aa).

Asn-71 carries the post-translational modification N4-methylasparagine. Cys-81 contributes to the (2R,3E)-phycocyanobilin binding site.

This sequence belongs to the phycobiliprotein family. In terms of processing, contains one covalently linked bilin chromophore.

The protein resides in the plastid. The protein localises to the chloroplast thylakoid membrane. In terms of biological role, allophycocyanin is a photosynthetic bile pigment-protein complex with maximum absorption at approximately 650 nanometers. The polypeptide is Allophycocyanin alpha-B chain (apcD) (Cyanidium caldarium (Red alga)).